The following is a 431-amino-acid chain: Trigger factor (431 aa).

The PPIase FKBP-type domain maps to 158-243 (GHLVALETWS…VIEVSEPVLL (86 aa)).

It belongs to the FKBP-type PPIase family. Tig subfamily.

It localises to the cytoplasm. It catalyses the reaction [protein]-peptidylproline (omega=180) = [protein]-peptidylproline (omega=0). Its function is as follows. Involved in protein export. Acts as a chaperone by maintaining the newly synthesized protein in an open conformation. Functions as a peptidyl-prolyl cis-trans isomerase. This Xylella fastidiosa (strain 9a5c) protein is Trigger factor (tig).